A 289-amino-acid polypeptide reads, in one-letter code: ATP synthase gamma chain (289 aa).

It belongs to the ATPase gamma chain family. In terms of assembly, F-type ATPases have 2 components, CF(1) - the catalytic core - and CF(0) - the membrane proton channel. CF(1) has five subunits: alpha(3), beta(3), gamma(1), delta(1), epsilon(1). CF(0) has three main subunits: a, b and c.

Its subcellular location is the cell inner membrane. Produces ATP from ADP in the presence of a proton gradient across the membrane. The gamma chain is believed to be important in regulating ATPase activity and the flow of protons through the CF(0) complex. In Dichelobacter nodosus (strain VCS1703A), this protein is ATP synthase gamma chain.